We begin with the raw amino-acid sequence, 199 residues long: Large ribosomal subunit protein bL9 (199 aa).

A compositionally biased stretch (basic and acidic residues) spans 149–166; sequence AEAERINRGEDINSRQED. Residues 149–199 are disordered; it reads AEAERINRGEDINSRQEDQDAAAEAIAAAGEFFDPEAQDETPETEAASEQQ. Positions 181-191 are enriched in acidic residues; the sequence is FDPEAQDETPE.

The protein belongs to the bacterial ribosomal protein bL9 family.

Its function is as follows. Binds to the 23S rRNA. The protein is Large ribosomal subunit protein bL9 of Afipia carboxidovorans (strain ATCC 49405 / DSM 1227 / KCTC 32145 / OM5) (Oligotropha carboxidovorans).